We begin with the raw amino-acid sequence, 1316 residues long: DNA-directed RNA polymerase subunit beta' (1316 aa).

Residues C60, C62, C75, and C78 each contribute to the Zn(2+) site. Residues D535, D537, and D539 each coordinate Mg(2+). C891, C968, C975, and C978 together coordinate Zn(2+).

It belongs to the RNA polymerase beta' chain family. As to quaternary structure, the RNAP catalytic core consists of 2 alpha, 1 beta, 1 beta' and 1 omega subunit. When a sigma factor is associated with the core the holoenzyme is formed, which can initiate transcription. Requires Mg(2+) as cofactor. The cofactor is Zn(2+).

It catalyses the reaction RNA(n) + a ribonucleoside 5'-triphosphate = RNA(n+1) + diphosphate. In terms of biological role, DNA-dependent RNA polymerase catalyzes the transcription of DNA into RNA using the four ribonucleoside triphosphates as substrates. In Mycolicibacterium paratuberculosis (strain ATCC BAA-968 / K-10) (Mycobacterium paratuberculosis), this protein is DNA-directed RNA polymerase subunit beta'.